The sequence spans 330 residues: DNA primase small subunit PriS (330 aa).

Catalysis depends on residues aspartate 101 and aspartate 103. Zn(2+) contacts are provided by cysteine 116, cysteine 119, cysteine 128, and aspartate 131. Residue aspartate 235 is part of the active site.

It belongs to the eukaryotic-type primase small subunit family. Heterodimer of a small subunit (PriS) and a large subunit (PriL). Requires Mg(2+) as cofactor. Mn(2+) is required as a cofactor.

Its function is as follows. Catalytic subunit of DNA primase, an RNA polymerase that catalyzes the synthesis of short RNA molecules used as primers for DNA polymerase during DNA replication. The small subunit contains the primase catalytic core and has DNA synthesis activity on its own. Binding to the large subunit stabilizes and modulates the activity, increasing the rate of DNA synthesis while decreasing the length of the DNA fragments, and conferring RNA synthesis capability. The DNA polymerase activity may enable DNA primase to also catalyze primer extension after primer synthesis. May also play a role in DNA repair. This Saccharolobus islandicus (strain Y.N.15.51 / Yellowstone #2) (Sulfolobus islandicus) protein is DNA primase small subunit PriS.